The sequence spans 4835 residues: Midasin (4835 aa).

AAA-ATPase protomer stretches follow at residues 12 to 161 (EVLR…PLVL), 324 to 689 (RSLD…HRFR), 797 to 1049 (MTTI…AEII), 1096 to 1375 (KFQD…DYIT), 1489 to 1738 (APTT…FGYR), and 1821 to 2110 (ALEA…SIDI). ATP contacts are provided by residues 31 to 38 (GPSASGRT), 356 to 363 (GPTGIGKT), 814 to 821 (GTTSSGKT), 1127 to 1134 (GVSGAGKT), 1513 to 1520 (GDPGVGKS), and 1839 to 1846 (GSPESGKS). The linker stretch occupies residues 2197–4058 (SVFIASTLNA…DGTGDQNVSK (1862 aa)). 2 disordered regions span residues 4033 to 4056 (DQKETDNDNQSGLGLGDGTGDQNV) and 4108 to 4523 (IEEE…LLNP). Acidic residues-rich tracts occupy residues 4109 to 4133 (EEEDSNGSDEEEVLEKEMGDEQGEA), 4141 to 4150 (EDDDSAEEYS), 4226 to 4241 (ADGEDETVNEELEEEQ), 4282 to 4291 (VDIDDNEASD), and 4315 to 4330 (NDEEEMQKDTEYDQEN). Polar residues predominate over residues 4331 to 4346 (ITDSNPDANEVGTNDQ). 3 stretches are compositionally biased toward basic and acidic residues: residues 4347–4360 (KQTHEDNDQFRQEN), 4394–4415 (EFQRIWKERLNIHDRESEKDEA), and 4429–4438 (VEFDDSKSGR). Over residues 4468–4477 (HNSSCETSQS) the composition is skewed to polar residues. Residues 4478-4488 (SHDRPPAEHLN) are compositionally biased toward basic and acidic residues. Residues 4629 to 4818 (QVLLAVDDSS…RHIEDLPETL (190 aa)) enclose the VWFA domain.

This sequence belongs to the midasin family. As to quaternary structure, associates with pre-60S ribosomes in the nucleoplasm.

It is found in the nucleus. The protein resides in the nucleolus. The protein localises to the nucleoplasm. Its function is as follows. Nuclear chaperone required for maturation and nuclear export of pre-60S ribosome subunits. Functions at successive maturation steps to remove ribosomal factors at critical transition points, first driving the exit of early pre-60S particles from the nucleolus and then driving late pre-60S particles from the nucleus. This Giardia intestinalis (Giardia lamblia) protein is Midasin (MDN1).